Reading from the N-terminus, the 334-residue chain is Tryptophan--tRNA ligase (334 aa).

Residues 11–13 (QPS) and 19–20 (GN) each bind ATP. Residues 12 to 20 (PSGELTIGN) carry the 'HIGH' region motif. Aspartate 135 contacts L-tryptophan. ATP-binding positions include 147–149 (GED), valine 186, and 195–199 (KMSKS). The short motif at 195–199 (KMSKS) is the 'KMSKS' region element.

This sequence belongs to the class-I aminoacyl-tRNA synthetase family. In terms of assembly, homodimer.

It is found in the cytoplasm. It catalyses the reaction tRNA(Trp) + L-tryptophan + ATP = L-tryptophyl-tRNA(Trp) + AMP + diphosphate + H(+). Catalyzes the attachment of tryptophan to tRNA(Trp). This Escherichia coli O157:H7 protein is Tryptophan--tRNA ligase.